The sequence spans 589 residues: Protein NRT1/ PTR FAMILY 4.7 (589 aa).

The next 12 membrane-spanning stretches (helical) occupy residues Gly-59–Ala-79, Ala-105–Phe-125, Thr-127–Val-147, Val-160–Leu-180, Phe-201–Val-221, Trp-230–Ala-250, Ile-344–Gln-364, Phe-383–Pro-403, Ile-429–Lys-449, Leu-471–Phe-491, Leu-520–Leu-540, and Phe-560–Ser-580.

It belongs to the major facilitator superfamily. Proton-dependent oligopeptide transporter (POT/PTR) (TC 2.A.17) family. Expressed in flowers.

It is found in the membrane. This is Protein NRT1/ PTR FAMILY 4.7 (NPF4.7) from Arabidopsis thaliana (Mouse-ear cress).